A 162-amino-acid polypeptide reads, in one-letter code: MGDWLLRRRGLALLLVLTLLLNLGALGLEYLADMPPCPLCWVQRGVFGLMSLVALVGLVYFPRGWGRWPLAGALGLSALTGVIIALRHLYIQANPDAVSCGMSPEVLAQFLPWWEVLLEILSGTTDCTQVDAVLGVPLPGWTLVGYLALGALGLYAVLARRA.

Residues 1 to 10 (MGDWLLRRRG) lie on the Cytoplasmic side of the membrane. The chain crosses the membrane as a helical span at residues 11–27 (LALLLVLTLLLNLGALG). The Periplasmic segment spans residues 28 to 45 (LEYLADMPPCPLCWVQRG). Cys37 and Cys40 are oxidised to a cystine. A helical transmembrane segment spans residues 46 to 62 (VFGLMSLVALVGLVYFP). At 63-68 (RGWGRW) the chain is on the cytoplasmic side. Residues 69-86 (PLAGALGLSALTGVIIAL) traverse the membrane as a helical segment. At 87–140 (RHLYIQANPDAVSCGMSPEVLAQFLPWWEVLLEILSGTTDCTQVDAVLGVPLPG) the chain is on the periplasmic side. Cys100 and Cys127 are disulfide-bonded. Residues 141–159 (WTLVGYLALGALGLYAVLA) traverse the membrane as a helical segment. Residues 160–162 (RRA) lie on the Cytoplasmic side of the membrane.

This sequence belongs to the DsbB family.

It is found in the cell inner membrane. Functionally, required for disulfide bond formation in some periplasmic proteins. Acts by oxidizing the DsbA protein. The sequence is that of Disulfide bond formation protein B from Alkalilimnicola ehrlichii (strain ATCC BAA-1101 / DSM 17681 / MLHE-1).